The primary structure comprises 371 residues: Maltose/maltodextrin import ATP-binding protein MalK (371 aa).

Residues 4–234 enclose the ABC transporter domain; it reads VQLQNVTKAW…PADRFVAGFI (231 aa). 36–43 is a binding site for ATP; the sequence is GPSGCGKS.

Belongs to the ABC transporter superfamily. Maltooligosaccharide importer (TC 3.A.1.1.1) family. The complex is composed of two ATP-binding proteins (MalK), two transmembrane proteins (MalG and MalK) and a solute-binding protein (MalE).

The protein resides in the cell inner membrane. The catalysed reaction is D-maltose(out) + ATP + H2O = D-maltose(in) + ADP + phosphate + H(+). Its function is as follows. Part of the ABC transporter complex MalEFGK involved in maltose/maltodextrin import. Responsible for energy coupling to the transport system. The chain is Maltose/maltodextrin import ATP-binding protein MalK from Escherichia coli O6:K15:H31 (strain 536 / UPEC).